Reading from the N-terminus, the 528-residue chain is Negative elongation factor A (528 aa).

An HDAg domain is found at Trp89–Leu248. The NELF-C/D-binding stretch occupies residues Arg125–Gln188. Thr157 is modified (phosphothreonine). Positions Leu189 to Leu248 are RNAPII-binding. The disordered stretch occupies residues Lys215–Arg245. Phosphoserine occurs at positions 225 and 233. The span at Thr227 to Arg238 shows a compositional bias: polar residues. Thr277 bears the Phosphothreonine mark. Low complexity predominate over residues Pro320–Ser341. Residues Pro320 to Thr409 are disordered. Ser363 is subject to Phosphoserine.

This sequence belongs to the NELF-A family. As to quaternary structure, the NELF complex is composed of NELFA, NELFB, NELFCD (isoform NELF-C or isoform NELF-D) and NELFE; NELFA and NELFCD form a stable subcomplex that binds to the N-terminus of NELFB. In vitro, the NELFA:NELFCD subcomplex binds to ssDNA and ssRNA in a sequence- and structure-dependent manner. Interacts with the RNA polymerase II complex when it is not phosphorylated by P-TEFb. As to expression, ubiquitous. Expressed in heart, brain, placenta, liver, skeletal muscle, kidney and pancreas. Expressed at lower level in adult lung. Expressed in fetal brain, lung, liver and kidney.

It is found in the nucleus. Essential component of the NELF complex, a complex that negatively regulates the elongation of transcription by RNA polymerase II. The NELF complex, which acts via an association with the DSIF complex and causes transcriptional pausing, is counteracted by the P-TEFb kinase complex. In terms of biological role, (Microbial infection) The NELF complex is involved in HIV-1 latency possibly involving recruitment of PCF11 to paused RNA polymerase II. In Homo sapiens (Human), this protein is Negative elongation factor A (NELFA).